A 264-amino-acid chain; its full sequence is Elongation factor Ts (264 aa).

The segment at 76-79 (TDFV) is involved in Mg(2+) ion dislocation from EF-Tu.

The protein belongs to the EF-Ts family.

The protein resides in the cytoplasm. In terms of biological role, associates with the EF-Tu.GDP complex and induces the exchange of GDP to GTP. It remains bound to the aminoacyl-tRNA.EF-Tu.GTP complex up to the GTP hydrolysis stage on the ribosome. The sequence is that of Elongation factor Ts from Deinococcus radiodurans (strain ATCC 13939 / DSM 20539 / JCM 16871 / CCUG 27074 / LMG 4051 / NBRC 15346 / NCIMB 9279 / VKM B-1422 / R1).